The sequence spans 519 residues: Sensor protein RprX (519 aa).

The next 2 helical transmembrane spans lie at 5-25 and 260-280; these read TIWI…YLQV and IPSM…IYIV. A Histidine kinase domain is found at 296-517; that stretch reads NMTHEFKTPI…KFIIALPLLK (222 aa). At His-299 the chain carries Phosphohistidine; by autocatalysis.

Its subcellular location is the cell membrane. The enzyme catalyses ATP + protein L-histidine = ADP + protein N-phospho-L-histidine.. Functionally, member of the two-component regulatory system RprX/RprY. May activate RprY by phosphorylation. This is Sensor protein RprX (rprX) from Bacteroides fragilis (strain YCH46).